Consider the following 66-residue polypeptide: Phylloseptin-B1 (66 aa).

Positions Met1–Cys22 are cleaved as a signal peptide. The propeptide occupies Glu23–Arg46. Leu65 is modified (leucine amide).

This sequence belongs to the frog skin active peptide (FSAP) family. Phylloseptin subfamily. As to expression, expressed by the skin glands.

It is found in the secreted. The protein localises to the target cell membrane. Functionally, antimicrobial peptide with activity against only a few strains of Gram-positive bacteria (S.aureus and B.megaterium). Acts in a synergistic effect in combination with Plasticin-B1 at doses that are not active alone. The sequence is that of Phylloseptin-B1 from Phyllomedusa bicolor (Two-colored leaf frog).